Consider the following 224-residue polypeptide: 7-cyano-7-deazaguanine synthase (224 aa).

10 to 20 (LSGGLDSATVA) provides a ligand contact to ATP. Zn(2+) is bound by residues cysteine 189, cysteine 199, cysteine 202, and cysteine 205.

Belongs to the QueC family. Zn(2+) is required as a cofactor.

It catalyses the reaction 7-carboxy-7-deazaguanine + NH4(+) + ATP = 7-cyano-7-deazaguanine + ADP + phosphate + H2O + H(+). The protein operates within purine metabolism; 7-cyano-7-deazaguanine biosynthesis. Catalyzes the ATP-dependent conversion of 7-carboxy-7-deazaguanine (CDG) to 7-cyano-7-deazaguanine (preQ(0)). The sequence is that of 7-cyano-7-deazaguanine synthase from Azotobacter vinelandii (strain DJ / ATCC BAA-1303).